Consider the following 140-residue polypeptide: Relaxin-3 (140 aa).

The first 26 residues, 1 to 26 (MAKRPLLLLLLAVWVLAGELWLRTEA), serve as a signal peptide directing secretion. 3 disulfides stabilise this stretch: cysteine 36–cysteine 127, cysteine 48–cysteine 140, and cysteine 126–cysteine 131. A propeptide spans 56 to 116 (SDMLAHEALG…RTPGALRGSR (61 aa)) (connecting peptide).

Belongs to the insulin family. As to quaternary structure, heterodimer of a B chain and an A chain linked by two disulfide bonds.

The protein resides in the secreted. Its function is as follows. May play a role in neuropeptide signaling processes. Ligand for LGR7, RXFP3 and RXFP4. The polypeptide is Relaxin-3 (RLN3) (Sus scrofa (Pig)).